We begin with the raw amino-acid sequence, 148 residues long: HTH-type transcriptional regulator Ptr1 (148 aa).

Positions 2-63 constitute an HTH asnC-type domain; that stretch reads LDRIDLKILR…SINPKNLGFE (62 aa). Residues 21–40 constitute a DNA-binding region (H-T-H motif); sequence FREIGRELGISEGTVRNRVK.

As to quaternary structure, homodimer.

Its function is as follows. Participates in positive as well as negative regulation of transcription. Binds to its own promoter. The chain is HTH-type transcriptional regulator Ptr1 (ptr1) from Methanocaldococcus jannaschii (strain ATCC 43067 / DSM 2661 / JAL-1 / JCM 10045 / NBRC 100440) (Methanococcus jannaschii).